Consider the following 222-residue polypeptide: Cytidylate kinase (222 aa).

10–18 (GPAGSGKSS) contacts ATP.

Belongs to the cytidylate kinase family. Type 1 subfamily.

The protein localises to the cytoplasm. It carries out the reaction CMP + ATP = CDP + ADP. It catalyses the reaction dCMP + ATP = dCDP + ADP. The sequence is that of Cytidylate kinase from Acholeplasma laidlawii (strain PG-8A).